The following is a 328-amino-acid chain: Stress response kinase A (328 aa).

The Proton acceptor role is filled by Asp-201. Positions 206 and 217 each coordinate Mg(2+). Asp-217 is a catalytic residue.

This sequence belongs to the SrkA/RdoA protein kinase family. In terms of assembly, monomer. It depends on Mg(2+) as a cofactor.

The protein localises to the cytoplasm. The catalysed reaction is L-seryl-[protein] + ATP = O-phospho-L-seryl-[protein] + ADP + H(+). It catalyses the reaction L-threonyl-[protein] + ATP = O-phospho-L-threonyl-[protein] + ADP + H(+). In terms of biological role, a protein kinase that phosphorylates Ser and Thr residues. Probably acts to suppress the effects of stress linked to accumulation of reactive oxygen species. Probably involved in the extracytoplasmic stress response. In Salmonella paratyphi A (strain ATCC 9150 / SARB42), this protein is Stress response kinase A.